Reading from the N-terminus, the 340-residue chain is Ferrochelatase (340 aa).

Residues H189 and E292 each contribute to the Fe cation site.

It belongs to the ferrochelatase family.

Its subcellular location is the cytoplasm. The catalysed reaction is heme b + 2 H(+) = protoporphyrin IX + Fe(2+). It participates in porphyrin-containing compound metabolism; protoheme biosynthesis; protoheme from protoporphyrin-IX: step 1/1. Its function is as follows. Catalyzes the ferrous insertion into protoporphyrin IX. The chain is Ferrochelatase from Pseudomonas aeruginosa (strain LESB58).